The sequence spans 569 residues: Laccase-6 (569 aa).

The signal sequence occupies residues 1-29; sequence MTSSAVPSLFRLSFLLFTLQVMNIGRIGA. Plastocyanin-like domains are found at residues 37-153 and 163-315; these read KVQT…PKAS and NEHT…YIGA. Asn83 carries an N-linked (GlcNAc...) asparagine glycan. Cu cation-binding residues include His87, His89, His132, and His134. Residues Asn208, Asn303, Asn319, Asn392, Asn438, and Asn444 are each glycosylated (N-linked (GlcNAc...) asparagine). Residues 417-553 form the Plastocyanin-like 3 domain; sequence DFPTTPEKAY…STMFIVKNGK (137 aa). The Cu cation site is built by His472, His475, His477, His532, Cys533, His534, His538, and Met543.

This sequence belongs to the multicopper oxidase family. It depends on Cu cation as a cofactor. As to expression, predominantly expressed in the inflorescence stem, but not in siliques.

The protein localises to the secreted. The protein resides in the extracellular space. It localises to the apoplast. The catalysed reaction is 4 hydroquinone + O2 = 4 benzosemiquinone + 2 H2O. Its function is as follows. Lignin degradation and detoxification of lignin-derived products. The chain is Laccase-6 (LAC6) from Arabidopsis thaliana (Mouse-ear cress).